A 333-amino-acid polypeptide reads, in one-letter code: Tetraacyldisaccharide 4'-kinase (333 aa).

60–67 (TVGGTGKT) serves as a coordination point for ATP.

The protein belongs to the LpxK family.

It carries out the reaction a lipid A disaccharide + ATP = a lipid IVA + ADP + H(+). The protein operates within glycolipid biosynthesis; lipid IV(A) biosynthesis; lipid IV(A) from (3R)-3-hydroxytetradecanoyl-[acyl-carrier-protein] and UDP-N-acetyl-alpha-D-glucosamine: step 6/6. Functionally, transfers the gamma-phosphate of ATP to the 4'-position of a tetraacyldisaccharide 1-phosphate intermediate (termed DS-1-P) to form tetraacyldisaccharide 1,4'-bis-phosphate (lipid IVA). The polypeptide is Tetraacyldisaccharide 4'-kinase (Pseudomonas putida (strain GB-1)).